The chain runs to 71 residues: Guanine nucleotide-binding protein G(I)/G(S)/G(O) subunit gamma-2 (71 aa).

A2 is subject to N-acetylalanine. Position 68 is a cysteine methyl ester (C68). C68 is lipidated: S-geranylgeranyl cysteine. Positions 69–71 are cleaved as a propeptide — removed in mature form; sequence AIL.

This sequence belongs to the G protein gamma family. G proteins are composed of 3 units, alpha, beta and gamma. In this context, interacts with GNB2. The heterodimer formed by GNB1 and GNG2 interacts with ARHGEF5. The heterodimer formed by GNB1 and GNG2 interacts with GRK2. Component of the TAS2R14-GNAI1 complex, consisting of TAS2R14, GNAI1, GNB1 and GNG2. Forms complexes with TAS2R14 and G-proteins; these complexes play a role in the perception of bitterness. Component of the TAS2R14-GNAT3 complex, consisting of TAS2R14, GNAT3, GNB1 and GNG2. Component of the TAS2R14-GNAS2 complex, consisting of TAS2R14, GNAS2, GNB1 and GNG2. In terms of tissue distribution, adrenal gland and brain.

It is found in the cell membrane. In terms of biological role, guanine nucleotide-binding proteins (G proteins) are involved as a modulator or transducer in various transmembrane signaling systems. The beta and gamma chains are required for the GTPase activity, for replacement of GDP by GTP, and for G protein-effector interaction. The chain is Guanine nucleotide-binding protein G(I)/G(S)/G(O) subunit gamma-2 (GNG2) from Bos taurus (Bovine).